Here is a 218-residue protein sequence, read N- to C-terminus: MTQDEMKKAAGWAALQYVEKDSIVGVGTGSTVNHFIDALATMKADIDGAVSSSEASTEKMKSLGIPVYDLNSVDDLSVYVDGADEINGHMDMIKGGGAALTREKIVAAVADKFICIVDNTKQVDILGEFPLPVEVIPMARSYVARQLVKLGGDPVYREGVVTDNGNIILDVYNMKIMTPKELEEQINAIVGVVTNGLFAMRGADVLLVGTPEGVKTVK.

Substrate-binding positions include 28-31, 81-84, and 94-97; these read TGST, DGAD, and KGGG. Glu103 acts as the Proton acceptor in catalysis. Residue Lys121 participates in substrate binding.

This sequence belongs to the ribose 5-phosphate isomerase family. In terms of assembly, homodimer.

It catalyses the reaction aldehydo-D-ribose 5-phosphate = D-ribulose 5-phosphate. The protein operates within carbohydrate degradation; pentose phosphate pathway; D-ribose 5-phosphate from D-ribulose 5-phosphate (non-oxidative stage): step 1/1. Catalyzes the reversible conversion of ribose-5-phosphate to ribulose 5-phosphate. The polypeptide is Ribose-5-phosphate isomerase A (Shewanella piezotolerans (strain WP3 / JCM 13877)).